We begin with the raw amino-acid sequence, 826 residues long: Arsenite oxidase subunit AioA (826 aa).

The [3Fe-4S] cluster site is built by Cys-22, Cys-25, and Cys-29. Substrate-binding residues include His-196, Glu-204, Arg-420, and His-424.

It belongs to the prokaryotic molybdopterin-containing oxidoreductase family. As to quaternary structure, heterodimer consisting of a large and a small subunit. Requires [3Fe-4S] cluster as cofactor. It depends on Mo-bis(molybdopterin guanine dinucleotide) as a cofactor.

It catalyses the reaction 2 oxidized [azurin] + arsenite + H2O = 2 reduced [azurin] + arsenate + 3 H(+). In terms of biological role, involved in the detoxification of arsenic. Oxidizes As(III)O3(3-) (arsenite) to the somewhat less toxic As(V)O4(3-) (arsenate). The sequence is that of Arsenite oxidase subunit AioA (aioA) from Alcaligenes faecalis.